The sequence spans 389 residues: Iron-sulfur cluster assembly factor IBA57 homolog, mitochondrial (389 aa).

The interval 1–20 is disordered; sequence MQASRSATRHLLRHATRPPS. A mitochondrion-targeting transit peptide spans 1–40; sequence MQASRSATRHLLRHATRPPSGFVCRSCLSRRSSSTSASPR. Residues 7–16 show a composition bias toward basic residues; the sequence is ATRHLLRHAT.

The protein belongs to the GcvT family. CAF17/IBA57 subfamily.

The protein resides in the mitochondrion matrix. This Pyricularia oryzae (strain 70-15 / ATCC MYA-4617 / FGSC 8958) (Rice blast fungus) protein is Iron-sulfur cluster assembly factor IBA57 homolog, mitochondrial (CAF17).